Consider the following 621-residue polypeptide: Threonine--tRNA ligase (621 aa).

An editing domain region spans residues 1 to 137 (MRILQLHCDS…ESSKVVTKDS (137 aa)). Residues 128–150 (ESSKVVTKDSTTKDDDEDTSDAL) are disordered. The tract at residues 202–501 (PHVALMKKLA…SKKGKKPQLP (300 aa)) is catalytic. Zn(2+) is bound by residues C294, H346, and H470. The span at 598–612 (QTSGKPYTGLNQSQH) shows a compositional bias: polar residues. Residues 598 to 621 (QTSGKPYTGLNQSQHLSKRPQLMV) are disordered.

This sequence belongs to the class-II aminoacyl-tRNA synthetase family. In terms of assembly, homodimer. Requires Zn(2+) as cofactor.

The protein resides in the cytoplasm. It catalyses the reaction tRNA(Thr) + L-threonine + ATP = L-threonyl-tRNA(Thr) + AMP + diphosphate + H(+). Its function is as follows. Catalyzes the attachment of threonine to tRNA(Thr) in a two-step reaction: L-threonine is first activated by ATP to form Thr-AMP and then transferred to the acceptor end of tRNA(Thr). Also edits incorrectly charged L-seryl-tRNA(Thr). This is Threonine--tRNA ligase from Nitrosopumilus maritimus (strain SCM1).